The chain runs to 224 residues: C-reactive protein (224 aa).

Residues 1-18 (MEKLLCFLVLTSLSHAFG) form the signal peptide. Glutamine 19 is modified (pyrrolidone carboxylic acid). Residues 23–224 (SRKAFVFPKE…EVFTKPQLWP (202 aa)) enclose the Pentraxin (PTX) domain. Cysteine 54 and cysteine 115 form a disulfide bridge. Aspartate 78, asparagine 79, glutamate 156, glutamine 157, aspartate 158, and glutamine 168 together coordinate Ca(2+).

It belongs to the pentraxin family. In terms of assembly, homopentamer. Pentraxin (or pentaxin) have a discoid arrangement of 5 non-covalently bound subunits. Interacts with FCN1; may regulate monocyte activation by FCN1. Ca(2+) serves as cofactor. Found in plasma.

Its subcellular location is the secreted. Displays several functions associated with host defense: it promotes agglutination, bacterial capsular swelling, phagocytosis and complement fixation through its calcium-dependent binding to phosphorylcholine. Can interact with DNA and histones and may scavenge nuclear material released from damaged circulating cells. The sequence is that of C-reactive protein (CRP) from Homo sapiens (Human).